Reading from the N-terminus, the 557-residue chain is MASLALSGSCSLAFPLKSRSLSLPRPPSSSLNLTKPLRSLDSRFSLLKSPLPVSLRRRSSTLVKASSTVASASSSPTPPLVPAPVPWQGAAIKPLLASIATGLILWFVPVPEGVTRNAWQLLAIFLATIVGIITQPLPLGAVALMGLGASVLTKTLTFAAAFSAFGDPIPWLIALAFFFARGFIKTGLGNRVAYQFVRLFGSSSLGLGYSLVFSEALLAPAIPSVSARAGGIFLPLVKSLCVACGSNVGDGTEHRLGSWLMLTCFQTSVISSSMFLTAMAANPLSANLAFNTIKQTIGWTDWAKAAIVPGLVSLIVVPFLLYLIYPPTVKSSPDAPKLAQEKLDKMGPMSKNELIMAATLFLTVGLWIFGAKLGVDAVTAAILGLSVLLVTGVVTWKECLAESVAWDTLTWFAALIAMAGYLNKYGLIEWFSQTVVKFVGGLGLSWQLSFGILVLLYFYTHYFFASGAAHIGAMFTAFLSVSTALGTPPYFAALVLAFLSNLMGGLTHYGIGSAPIFYGANYVPLAKWWGYGFLISIVNILIWLGVGGAWWKFIGLW.

Residues 1-69 (MASLALSGSC…STLVKASSTV (69 aa)) constitute a chloroplast transit peptide. 12 consecutive transmembrane segments (helical) span residues 90–110 (AAIK…FVPV), 122–142 (LAIF…LGAV), 158–178 (FAAA…LAFF), 229–249 (AGGI…SNVG), 256–276 (LGSW…SMFL), 305–325 (AAIV…YLIY), 355–375 (IMAA…KLGV), 376–396 (DAVT…VVTW), 411–431 (WFAA…IEWF), 438–458 (FVGG…LLYF), 477–497 (AFLS…LVLA), and 531–551 (YGFL…GAWW).

This sequence belongs to the SLC13A/DASS transporter (TC 2.A.47) family. DIT1 subfamily. As to expression, expressed in roots, rosette and cauline leaves, stems, flowers and siliques.

The protein resides in the plastid. Its subcellular location is the chloroplast inner membrane. 2-oxoglutarate/malate translocator involved with DIT2-1 in primary ammonia assimilation and in the re-assimilation of ammonia generated by the photorespiratory pathway. Imports 2-oxoglutarate into plastids as precursor for ammonia assimilation. 2-oxoglutarate is converted to glutamate, the end product of ammonia assimilation, which is exported to the cytosol by DIT2-1. This chain is Dicarboxylate transporter 1, chloroplastic (DIT1), found in Arabidopsis thaliana (Mouse-ear cress).